The primary structure comprises 354 residues: Cellular communication network factor 6 (354 aa).

Residues 1–23 form the signal peptide; sequence MRRLLFCTLLMTGLTQLCCRTQG. The 74-residue stretch at 44–117 folds into the IGFBP N-terminal domain; the sequence is RTEVCRWPCR…RYETGVCAYL (74 aa). Intrachain disulfides connect Cys48/Cys72, Cys52/Cys74, Cys54/Cys75, Cys61/Cys78, Cys86/Cys100, Cys92/Cys114, Cys209/Cys238, Cys219/Cys223, Cys247/Cys252, Cys268/Cys305, Cys285/Cys319, Cys296/Cys335, and Cys299/Cys337. One can recognise a TSP type-1 domain in the interval 208 to 253; sequence KCLVQATKWTPCSRTCGMGISNRVTNDNANCEMRKERRLCYIQPCS. The CTCK domain occupies 268-342; the sequence is CQPTFQLPKA…TSCVCQRDCR (75 aa). N-linked (GlcNAc...) asparagine glycosylation is present at Asn308.

It belongs to the CCN family.

It is found in the secreted. The protein resides in the mitochondrion. In terms of biological role, plays a role in mitochondrial electron transport and mitochondrial respiration. This Mus musculus (Mouse) protein is Cellular communication network factor 6.